We begin with the raw amino-acid sequence, 348 residues long: Nicotinate-nucleotide--dimethylbenzimidazole phosphoribosyltransferase (348 aa).

Catalysis depends on Glu316, which acts as the Proton acceptor.

This sequence belongs to the CobT family.

It catalyses the reaction 5,6-dimethylbenzimidazole + nicotinate beta-D-ribonucleotide = alpha-ribazole 5'-phosphate + nicotinate + H(+). The protein operates within nucleoside biosynthesis; alpha-ribazole biosynthesis; alpha-ribazole from 5,6-dimethylbenzimidazole: step 1/2. Functionally, catalyzes the synthesis of alpha-ribazole-5'-phosphate from nicotinate mononucleotide (NAMN) and 5,6-dimethylbenzimidazole (DMB). The sequence is that of Nicotinate-nucleotide--dimethylbenzimidazole phosphoribosyltransferase from Xanthomonas oryzae pv. oryzae (strain PXO99A).